The following is a 49-amino-acid chain: MGVKKVALACTVCGSRNYYVAENKNRTERLELNKYCKHCGQYAQHKETR.

It belongs to the bacterial ribosomal protein bL33 family.

This is Large ribosomal subunit protein bL33B from Latilactobacillus sakei subsp. sakei (strain 23K) (Lactobacillus sakei subsp. sakei).